The chain runs to 161 residues: Putative pre-16S rRNA nuclease (161 aa).

It belongs to the YqgF nuclease family.

It is found in the cytoplasm. Its function is as follows. Could be a nuclease involved in processing of the 5'-end of pre-16S rRNA. The chain is Putative pre-16S rRNA nuclease from Bradyrhizobium diazoefficiens (strain JCM 10833 / BCRC 13528 / IAM 13628 / NBRC 14792 / USDA 110).